The sequence spans 485 residues: Aspartyl/glutamyl-tRNA(Asn/Gln) amidotransferase subunit B (485 aa).

The protein belongs to the GatB/GatE family. GatB subfamily. Heterotrimer of A, B and C subunits.

It carries out the reaction L-glutamyl-tRNA(Gln) + L-glutamine + ATP + H2O = L-glutaminyl-tRNA(Gln) + L-glutamate + ADP + phosphate + H(+). The enzyme catalyses L-aspartyl-tRNA(Asn) + L-glutamine + ATP + H2O = L-asparaginyl-tRNA(Asn) + L-glutamate + ADP + phosphate + 2 H(+). Allows the formation of correctly charged Asn-tRNA(Asn) or Gln-tRNA(Gln) through the transamidation of misacylated Asp-tRNA(Asn) or Glu-tRNA(Gln) in organisms which lack either or both of asparaginyl-tRNA or glutaminyl-tRNA synthetases. The reaction takes place in the presence of glutamine and ATP through an activated phospho-Asp-tRNA(Asn) or phospho-Glu-tRNA(Gln). The polypeptide is Aspartyl/glutamyl-tRNA(Asn/Gln) amidotransferase subunit B (Anaplasma marginale (strain St. Maries)).